The chain runs to 183 residues: Ribosome maturation factor RimP (183 aa).

This sequence belongs to the RimP family.

Its subcellular location is the cytoplasm. Its function is as follows. Required for maturation of 30S ribosomal subunits. The chain is Ribosome maturation factor RimP from Mycobacterium bovis (strain ATCC BAA-935 / AF2122/97).